Here is a 368-residue protein sequence, read N- to C-terminus: 3-dehydroquinate synthase (368 aa).

Residues 112-116 (GVVGD), 136-137 (TT), Lys-149, Lys-158, and 176-179 (FLDT) contribute to the NAD(+) site. Zn(2+)-binding residues include Glu-191, His-257, and His-274.

The protein belongs to the sugar phosphate cyclases superfamily. Dehydroquinate synthase family. Co(2+) serves as cofactor. Zn(2+) is required as a cofactor. Requires NAD(+) as cofactor.

It is found in the cytoplasm. The enzyme catalyses 7-phospho-2-dehydro-3-deoxy-D-arabino-heptonate = 3-dehydroquinate + phosphate. It functions in the pathway metabolic intermediate biosynthesis; chorismate biosynthesis; chorismate from D-erythrose 4-phosphate and phosphoenolpyruvate: step 2/7. Its function is as follows. Catalyzes the conversion of 3-deoxy-D-arabino-heptulosonate 7-phosphate (DAHP) to dehydroquinate (DHQ). The polypeptide is 3-dehydroquinate synthase (Natranaerobius thermophilus (strain ATCC BAA-1301 / DSM 18059 / JW/NM-WN-LF)).